Consider the following 159-residue polypeptide: Phosphopantetheine adenylyltransferase (159 aa).

Thr10 is a binding site for substrate. ATP is bound by residues 10-11 (TF) and His18. 3 residues coordinate substrate: Lys42, Met74, and Arg88. Residues 89-91 (GLR), Glu99, and 124-130 (WSFISSS) each bind ATP.

It belongs to the bacterial CoaD family. In terms of assembly, homohexamer. It depends on Mg(2+) as a cofactor.

It localises to the cytoplasm. The catalysed reaction is (R)-4'-phosphopantetheine + ATP + H(+) = 3'-dephospho-CoA + diphosphate. The protein operates within cofactor biosynthesis; coenzyme A biosynthesis; CoA from (R)-pantothenate: step 4/5. Its function is as follows. Reversibly transfers an adenylyl group from ATP to 4'-phosphopantetheine, yielding dephospho-CoA (dPCoA) and pyrophosphate. This chain is Phosphopantetheine adenylyltransferase, found in Salmonella typhimurium (strain LT2 / SGSC1412 / ATCC 700720).